The following is a 53-amino-acid chain: Rubredoxin (53 aa).

The Rubredoxin-like domain maps to Met-1–Ala-53. Fe cation is bound by residues Cys-6, Cys-9, Cys-39, and Cys-42.

It belongs to the rubredoxin family. The cofactor is Fe(3+).

Functionally, rubredoxin is a small nonheme, iron protein lacking acid-labile sulfide. Its single Fe, chelated to 4 Cys, functions as an electron acceptor and may also stabilize the conformation of the molecule. This chain is Rubredoxin, found in Acetoanaerobium sticklandii (strain ATCC 12662 / DSM 519 / JCM 1433 / CCUG 9281 / NCIMB 10654 / HF) (Clostridium sticklandii).